A 148-amino-acid chain; its full sequence is Aspartate carbamoyltransferase regulatory chain (148 aa).

4 residues coordinate Zn(2+): cysteine 106, cysteine 111, cysteine 134, and cysteine 137.

The protein belongs to the PyrI family. Contains catalytic and regulatory chains. It depends on Zn(2+) as a cofactor.

Its function is as follows. Involved in allosteric regulation of aspartate carbamoyltransferase. This chain is Aspartate carbamoyltransferase regulatory chain, found in Methanococcus maripaludis (strain C6 / ATCC BAA-1332).